The primary structure comprises 545 residues: CTP synthase (545 aa).

Positions 1 to 266 (MTTKYIFVTG…DSYFTERFGL (266 aa)) are amidoligase domain. Position 14 (serine 14) interacts with CTP. Serine 14 is a binding site for UTP. Residues 15–20 (SLGKGI) and aspartate 72 each bind ATP. Residues aspartate 72 and glutamate 140 each coordinate Mg(2+). CTP is bound by residues 147-149 (DIE), 187-192 (KTKPTQ), and lysine 223. UTP contacts are provided by residues 187 to 192 (KTKPTQ) and lysine 223. Residue 239 to 241 (KDV) coordinates ATP. Positions 291 to 542 (TIGMVGKYVS…VKAAGEYQKR (252 aa)) constitute a Glutamine amidotransferase type-1 domain. Residue glycine 352 participates in L-glutamine binding. Cysteine 379 acts as the Nucleophile; for glutamine hydrolysis in catalysis. L-glutamine-binding positions include 380–383 (LGMQ), glutamate 403, and arginine 470. Catalysis depends on residues histidine 515 and glutamate 517.

This sequence belongs to the CTP synthase family. In terms of assembly, homotetramer.

The catalysed reaction is UTP + L-glutamine + ATP + H2O = CTP + L-glutamate + ADP + phosphate + 2 H(+). It catalyses the reaction L-glutamine + H2O = L-glutamate + NH4(+). The enzyme catalyses UTP + NH4(+) + ATP = CTP + ADP + phosphate + 2 H(+). It participates in pyrimidine metabolism; CTP biosynthesis via de novo pathway; CTP from UDP: step 2/2. Its activity is regulated as follows. Allosterically activated by GTP, when glutamine is the substrate; GTP has no effect on the reaction when ammonia is the substrate. The allosteric effector GTP functions by stabilizing the protein conformation that binds the tetrahedral intermediate(s) formed during glutamine hydrolysis. Inhibited by the product CTP, via allosteric rather than competitive inhibition. Its function is as follows. Catalyzes the ATP-dependent amination of UTP to CTP with either L-glutamine or ammonia as the source of nitrogen. Regulates intracellular CTP levels through interactions with the four ribonucleotide triphosphates. This is CTP synthase from Aeromonas hydrophila subsp. hydrophila (strain ATCC 7966 / DSM 30187 / BCRC 13018 / CCUG 14551 / JCM 1027 / KCTC 2358 / NCIMB 9240 / NCTC 8049).